Consider the following 453-residue polypeptide: Dibenzothiophene-sulfone monooxygenase (453 aa).

5 residues coordinate FMN: D59, T106, H156, Y160, and S231.

Belongs to the NtaA/SnaA/DszA monooxygenase family. As to quaternary structure, homodimer.

The protein resides in the cytoplasm. The enzyme catalyses dibenzothiophene 5,5-dioxide + FMNH2 + NADH + O2 = 2'-hydroxybiphenyl-2-sulfinate + FMN + NAD(+) + H2O + H(+). Its pathway is sulfur metabolism; dibenzothiophene degradation. Catalyzes the second step of the '4S' desulfurization pathway that removes covalently bound sulfur from dibenzothiophene (DBT) without breaking carbon-carbon bonds. Metabolizes DBT-sulfone (DBTO2 or DBT 5,5-dioxide) to 2-(2'-hydroxyphenyl)benzene sulphinate (HBPS). This chain is Dibenzothiophene-sulfone monooxygenase, found in Rhodococcus erythropolis (Arthrobacter picolinophilus).